The chain runs to 366 residues: NADH-quinone oxidoreductase subunit D (366 aa).

This sequence belongs to the complex I 49 kDa subunit family. NDH-1 is composed of 14 different subunits. Subunits NuoB, C, D, E, F, and G constitute the peripheral sector of the complex.

It localises to the cell membrane. It carries out the reaction a quinone + NADH + 5 H(+)(in) = a quinol + NAD(+) + 4 H(+)(out). In terms of biological role, NDH-1 shuttles electrons from NADH, via FMN and iron-sulfur (Fe-S) centers, to quinones in the respiratory chain. The immediate electron acceptor for the enzyme in this species is believed to be a menaquinone. Couples the redox reaction to proton translocation (for every two electrons transferred, four hydrogen ions are translocated across the cytoplasmic membrane), and thus conserves the redox energy in a proton gradient. This Bacillus cytotoxicus (strain DSM 22905 / CIP 110041 / 391-98 / NVH 391-98) protein is NADH-quinone oxidoreductase subunit D.